A 560-amino-acid polypeptide reads, in one-letter code: 2-hydroxyacyl-CoA lyase (560 aa).

Position 49 (Glu49) interacts with thiamine diphosphate. Residues Asp446 and Asn473 each contribute to the Mg(2+) site. The Peroxisomal target signal 1 (PTS1) signature appears at 558–560 (PRL).

This sequence belongs to the TPP enzyme family. It depends on Mg(2+) as a cofactor. The cofactor is thiamine diphosphate.

It localises to the cytoplasm. Its subcellular location is the peroxisome matrix. It catalyses the reaction an (R)-2-hydroxy-long-chain-fatty acyl-CoA = a long-chain fatty aldehyde + formyl-CoA. The catalysed reaction is a 2-hydroxy-3-methyl fatty acyl-CoA = a 2-methyl-branched fatty aldehyde + formyl-CoA. In terms of biological role, catalyzes a carbon-carbon cleavage reaction; cleaves a 2-hydroxy-3-methylacyl-CoA into formyl-CoA and a 2-methyl-branched fatty aldehyde. The sequence is that of 2-hydroxyacyl-CoA lyase from Saccharomyces cerevisiae (strain ATCC 204508 / S288c) (Baker's yeast).